Reading from the N-terminus, the 232-residue chain is MSNVDRAEIAKFEALAHRWWDRESEFKPLHDINPLRVNWIDERVGLAGKKVLDVGCGGGILSEAMALRGATVTGIDMGEAPLAVAQLHQLESGVSVEYRQITAEDMAEEMPEQYDVVTCLEMLEHVPDPSSVIRACYRMVKPGGQVFFSTINRNPKAYLFAVVGAEYILNLLPRGTHDFKKFIRPSELGAWSRDAGLQVKDVIGLTYNPLTKHYKLTSDVGVNYMIQTLREA.

The S-adenosyl-L-methionine site is built by Arg36, Gly55, Asp76, and Leu120.

It belongs to the methyltransferase superfamily. UbiG/COQ3 family.

The enzyme catalyses a 3-demethylubiquinol + S-adenosyl-L-methionine = a ubiquinol + S-adenosyl-L-homocysteine + H(+). It catalyses the reaction a 3-(all-trans-polyprenyl)benzene-1,2-diol + S-adenosyl-L-methionine = a 2-methoxy-6-(all-trans-polyprenyl)phenol + S-adenosyl-L-homocysteine + H(+). It participates in cofactor biosynthesis; ubiquinone biosynthesis. O-methyltransferase that catalyzes the 2 O-methylation steps in the ubiquinone biosynthetic pathway. The polypeptide is Ubiquinone biosynthesis O-methyltransferase (Pseudomonas savastanoi pv. phaseolicola (strain 1448A / Race 6) (Pseudomonas syringae pv. phaseolicola (strain 1448A / Race 6))).